The chain runs to 147 residues: Sentan (147 aa).

Residues M1–R32 are disordered. Basic and acidic residues predominate over residues T8 to G17.

It belongs to the S-100 family.

The protein localises to the cell projection. It localises to the cilium. May be a component of the linker structure that bridges the ciliary membrane and peripheral singlet microtubules. The protein is Sentan (SNTN) of Homo sapiens (Human).